Here is a 305-residue protein sequence, read N- to C-terminus: DNA-directed RNA polymerase 35 kDa subunit (305 aa).

This sequence belongs to the poxviridae DNA-directed RNA polymerase 35 kDa subunit family. In terms of assembly, the DNA-dependent RNA polymerase used for intermediate and late genes expression consists of eight subunits 147 kDa, 133 kDa, 35 kDa, 30 kDa, 22 kDa, 19 kDa, 18 kDa and 7 kDa totalling more than 500 kDa in mass. The same holoenzyme, with the addition of the transcription-specificity factor RAP94, is used for early gene expression.

The protein resides in the virion. The catalysed reaction is RNA(n) + a ribonucleoside 5'-triphosphate = RNA(n+1) + diphosphate. Functionally, part of the DNA-dependent RNA polymerase which catalyzes the transcription of viral DNA into RNA using the four ribonucleoside triphosphates as substrates. Responsible for the transcription of early, intermediate and late genes. DNA-dependent RNA polymerase associates with the early transcription factor (ETF) thereby allowing the early genes transcription. Late transcription, and probably also intermediate transcription, require newly synthesized RNA polymerase. This Rabbitpox virus (strain Utrecht) (RPV) protein is DNA-directed RNA polymerase 35 kDa subunit (RPO35).